Reading from the N-terminus, the 214-residue chain is MKLFIDTANIEEIKEVAQWGILSGVTTNPSLIAKEGRDFKQVIAEITAIVEGPISAEVVSLQAEEMLKEAQDLVAIHPNVVIKVPMTAEGLKAVKGFSEQGIKTNVTLVFSANQALLAARAGASFVSPFVGRLDDIGQEGSELVRQIIEIYDIHGIETEIIAASIRHTQHLTDAALAGAHIATVPYKVLKQSLLHPLTDQGIEKFLKDWEGLVK.

The Schiff-base intermediate with substrate role is filled by Lys-83.

The protein belongs to the transaldolase family. Type 3B subfamily.

It localises to the cytoplasm. The enzyme catalyses D-sedoheptulose 7-phosphate + D-glyceraldehyde 3-phosphate = D-erythrose 4-phosphate + beta-D-fructose 6-phosphate. The protein operates within carbohydrate degradation; pentose phosphate pathway; D-glyceraldehyde 3-phosphate and beta-D-fructose 6-phosphate from D-ribose 5-phosphate and D-xylulose 5-phosphate (non-oxidative stage): step 2/3. Functionally, transaldolase is important for the balance of metabolites in the pentose-phosphate pathway. In Alkaliphilus metalliredigens (strain QYMF), this protein is Probable transaldolase.